A 202-amino-acid chain; its full sequence is Glycerol-3-phosphate acyltransferase (202 aa).

Transmembrane regions (helical) follow at residues 2 to 22 (ANLL…AVVV), 85 to 105 (LAMV…HRFA), 119 to 139 (AINP…AFFF), and 158 to 178 (VLME…ILLI).

Belongs to the PlsY family. Probably interacts with PlsX.

Its subcellular location is the cell inner membrane. The enzyme catalyses an acyl phosphate + sn-glycerol 3-phosphate = a 1-acyl-sn-glycero-3-phosphate + phosphate. Its pathway is lipid metabolism; phospholipid metabolism. Its function is as follows. Catalyzes the transfer of an acyl group from acyl-phosphate (acyl-PO(4)) to glycerol-3-phosphate (G3P) to form lysophosphatidic acid (LPA). This enzyme utilizes acyl-phosphate as fatty acyl donor, but not acyl-CoA or acyl-ACP. This is Glycerol-3-phosphate acyltransferase from Cupriavidus pinatubonensis (strain JMP 134 / LMG 1197) (Cupriavidus necator (strain JMP 134)).